Reading from the N-terminus, the 619-residue chain is Sodium-coupled monocarboxylate transporter 2 (619 aa).

The Extracellular portion of the chain corresponds to 1–9 (MRVKNFEAW). Residues 10-30 (DYVVFAGLFVISSGIGVFFAI) traverse the membrane as a helical segment. Topologically, residues 31 to 47 (KERKKTTSREFLVGGRQ) are cytoplasmic. The chain crosses the membrane as a helical span at residues 48–68 (MSFGPVALSLTASFMSAVTVL). At 69–80 (GTPAEVYRFGAS) the chain is on the extracellular side. A helical transmembrane segment spans residues 81–101 (FFLFLISYVFVVFFTSELFLP). Over 102 to 128 (VFYRSGITSTYEYLQLRFNKPVRYAAT) the chain is Cytoplasmic. Residues 129–149 (IIYIVQTILYTGVVVYAPALA) traverse the membrane as a helical segment. At 150 to 157 (LNQVTGFN) the chain is on the extracellular side. Residues 158 to 178 (LWASVFATGIVCTFYCSLGGL) traverse the membrane as a helical segment. Residues 179-180 (KA) lie on the Cytoplasmic side of the membrane. A helical transmembrane segment spans residues 181 to 201 (VVWTDAFQMVVMIVGFLTVLI). Residues 202 to 235 (QGSNHVGGFNNVLEKAGNGSRLHIVDFDVDPLRR) lie on the Extracellular side of the membrane. A glycan (N-linked (GlcNAc...) asparagine) is linked at Asn-219. A helical membrane pass occupies residues 236-256 (HTFWTITIGGTFTWLGVYGVN). Residues 257–275 (QSTIQRCISCKTEKHAKLA) are Cytoplasmic-facing. Residues 276–296 (LYFNLLGLWIIVACAVFSGLI) traverse the membrane as a helical segment. Over 297 to 321 (MYSHFKDCDPWTSGVISAPDQLMPY) the chain is Extracellular. The helical transmembrane segment at 322-342 (FVMEIFATMPGLPGLFVACAF) threads the bilayer. Topologically, residues 343–385 (SGTLSTVAASINALATVTFEDFVKSCFPHLSDKLSTWISKGLC) are cytoplasmic. Residues 386-406 (ILFGIMCTSMAVVASLMGSVV) form a helical membrane-spanning segment. The Extracellular portion of the chain corresponds to 407 to 411 (QAALS). A helical transmembrane segment spans residues 412–432 (IHGMCGGPMLGLFTLGLVFPF). Residues 433 to 437 (VNWKG) are Cytoplasmic-facing. Residues 438-458 (ALGGLLTGITLSFWVAIGSFI) form a helical membrane-spanning segment. Topologically, residues 459–504 (YPAPESKTLPLPLSTEHCVELNITTTVAPQISSRPVLADTWYSLSY) are extracellular. Asn-480 carries an N-linked (GlcNAc...) asparagine glycan. A helical transmembrane segment spans residues 505–525 (LYFSAVGCLGCIAAGIIISFL). The Cytoplasmic segment spans residues 526–619 (TGKQRGKDID…NSVPEKTTYF (94 aa)).

It belongs to the sodium:solute symporter (SSF) (TC 2.A.21) family. As to expression, expressed in the cortical region of the kidney corresponding to the proximal tubule. Expressed in Mueller cells of the inner retina (at protein level). Isoform 1 is expressed in the retina, kidney, small intestine and skeletal muscle. Isoform 2 is not detected in the kidney, small intestine and skeletal muscle. In the kidney, expressed predominantly in tubular epithelial cells of the cortical region and in the convoluted portions of the proximal tubule (pars convoluta). In the small intestine, its expression is highest in the proximal part and gradually decreased towards the distal end. Expressed in the neural retina. Not detected in the caecum and colon.

It localises to the apical cell membrane. It catalyses the reaction (S)-lactate(out) + Na(+)(out) = (S)-lactate(in) + Na(+)(in). It carries out the reaction nicotinate(out) + Na(+)(out) = nicotinate(in) + Na(+)(in). The enzyme catalyses pyruvate(out) + Na(+)(out) = pyruvate(in) + Na(+)(in). The catalysed reaction is propanoate(out) + Na(+)(out) = propanoate(in) + Na(+)(in). It catalyses the reaction butanoate(out) + Na(+)(out) = butanoate(in) + Na(+)(in). It carries out the reaction acetoacetate(out) + Na(+)(out) = acetoacetate(in) + Na(+)(in). Functionally, acts as an electroneutral and low-affinity sodium (Na(+))-dependent sodium-coupled solute transporter. Catalyzes the transport across the plasma membrane of many monocarboxylates such as lactate, pyruvate, nicotinate, propionate, butyrate and beta-D-hydroxybutyrate. May be responsible for the first step of reabsorption of monocarboxylates from the lumen of the proximal tubule of the kidney and the small intestine. May play also a role in monocarboxylates transport in the retina. Mediates electroneutral uptake of lactate, with a stoichiometry of 2 Na(+) for each lactate. The sequence is that of Sodium-coupled monocarboxylate transporter 2 (Slc5a12) from Mus musculus (Mouse).